We begin with the raw amino-acid sequence, 445 residues long: Arginine/agmatine antiporter (445 aa).

The Cytoplasmic segment spans residues 1-12 (MSSDADAHKVGL). A helical transmembrane segment spans residues 13–24 (IPVTLMVSGNIM). L-arginine-binding residues include I23, S26, and G27. Positions 25-27 (GSG) match the Helix-breaking GSG motif TM1 motif. Residues 25 to 42 (GSGVFLLPANLASTGGIA) are Periplasmic-facing. A helical transmembrane segment spans residues 43–61 (IYGWLVTIIGALGLSMVYA). Topologically, residues 62 to 86 (KMSFLDPSPGGSYAYARRCFGPFLG) are cytoplasmic. A helical transmembrane segment spans residues 87 to 112 (YQTNVLYWLACWIGNIAMVVIGVGYL). A96, C97, and N101 together coordinate L-arginine. At 113 to 124 (SYFFPILKDPLV) the chain is on the periplasmic side. The chain crosses the membrane as a helical span at residues 125–142 (LTITCVVVLWIFVLLNIV). Position 143 (G143) is a topological domain, cytoplasmic. A helical membrane pass occupies residues 144-171 (PKMITRVQAVATVLALIPIVGIAVFGWF). Residues 172–194 (WFRGETYMAAWNVSGLGTFGAIQ) are Periplasmic-facing. Residues 195 to 207 (STLNVTLWSFIGV) form a helical membrane-spanning segment. Residues W202 and I205 each contribute to the L-arginine site. Positions 206–210 (GVESA) match the Helix-breaking GVESA motif TM6 motif. Residues 208-226 (ESASVAAGVVKNPKRNVPI) lie on the Cytoplasmic side of the membrane. Residues 227–247 (ATIGGVLIAAVCYVLSTTAIM) form a helical membrane-spanning segment. The Periplasmic segment spans residues 248–277 (GMIPNAALRVSASPFGDAARMALGDTAGAI). A helical membrane pass occupies residues 278–301 (VSFCAAAGCLGSLGGWTLLAGQTA). W293 is a binding site for L-arginine. Over 302–323 (KAAADDGLFPPIFARVNKAGTP) the chain is Cytoplasmic. The chain crosses the membrane as a helical span at residues 324 to 340 (VAGLIIVGILMTIFQLS). At 341–352 (SISPNATKEFGL) the chain is on the periplasmic side. Residues 353 to 370 (VSSVSVIFTLVPYLYTCA) form a helical membrane-spanning segment. L-arginine is bound at residue S357. At 371-388 (ALLLLGHGHFGKARPAYL) the chain is on the cytoplasmic side. A helical transmembrane segment spans residues 389 to 404 (AVTTIAFLYCIWAVVG). Over 405 to 407 (SGA) the chain is Periplasmic. A helical membrane pass occupies residues 408–426 (KEVMWSFVTLMVITAMYAL). At 427 to 445 (NYNRLHKNPYPLDAPISKD) the chain is on the cytoplasmic side.

This sequence belongs to the amino acid-polyamine-organocation (APC) superfamily. Basic amino acid/polyamine antiporter (APA) (TC 2.A.3.2) family. As to quaternary structure, homodimer;each subunit has its own individual transport capacity.

It is found in the cell inner membrane. The enzyme catalyses agmatine(in) + L-arginine(out) = agmatine(out) + L-arginine(in). Major component of the acid-resistance (AR) system allowing enteric pathogens to survive the acidic environment in the stomach. Exchanges extracellular arginine for its intracellular decarboxylation product agmatine (Agm) thereby expelling intracellular protons. Probably undergoes several conformational states in order to translocate the substrate across the membrane; keeps the substrate accessible to only 1 side of the membrane at a time by opening and closing 3 membrane-internal gates. This Escherichia coli O157:H7 protein is Arginine/agmatine antiporter (adiC).